A 149-amino-acid polypeptide reads, in one-letter code: UPF0178 protein CPF_2548 (149 aa).

The protein belongs to the UPF0178 family.

The chain is UPF0178 protein CPF_2548 from Clostridium perfringens (strain ATCC 13124 / DSM 756 / JCM 1290 / NCIMB 6125 / NCTC 8237 / Type A).